The primary structure comprises 93 residues: MVRNSFISIISQKENKENRGSVEFQVLSFTTKIRRLTSHLKLHKTDYSSERGLRKILGKRQRVLAYLSKKNRVRYQELQDLISQLNIRETKTR.

The protein belongs to the universal ribosomal protein uS15 family. As to quaternary structure, part of the 30S ribosomal subunit.

It localises to the plastid. The protein localises to the chloroplast. This is Small ribosomal subunit protein uS15c (rps15) from Jasminum nudiflorum (Winter jasmine).